Consider the following 247-residue polypeptide: Putative methyltransferase YqeM (247 aa).

The protein belongs to the methyltransferase superfamily.

Functionally, may be a S-adenosyl-L-methionine (SAM)-dependent methyltransferase. This is Putative methyltransferase YqeM (yqeM) from Bacillus subtilis (strain 168).